A 311-amino-acid polypeptide reads, in one-letter code: Ribose-phosphate pyrophosphokinase (311 aa).

ATP contacts are provided by residues 37 to 39 and 96 to 97; these read DGE and RQ. Positions 130 and 170 each coordinate Mg(2+). The active site involves Lys-193. D-ribose 5-phosphate-binding positions include Arg-195, Asp-219, and 223–227; that span reads DTAGT.

It belongs to the ribose-phosphate pyrophosphokinase family. Class I subfamily. Homohexamer. Mg(2+) is required as a cofactor.

The protein resides in the cytoplasm. The catalysed reaction is D-ribose 5-phosphate + ATP = 5-phospho-alpha-D-ribose 1-diphosphate + AMP + H(+). The protein operates within metabolic intermediate biosynthesis; 5-phospho-alpha-D-ribose 1-diphosphate biosynthesis; 5-phospho-alpha-D-ribose 1-diphosphate from D-ribose 5-phosphate (route I): step 1/1. Its function is as follows. Involved in the biosynthesis of the central metabolite phospho-alpha-D-ribosyl-1-pyrophosphate (PRPP) via the transfer of pyrophosphoryl group from ATP to 1-hydroxyl of ribose-5-phosphate (Rib-5-P). The sequence is that of Ribose-phosphate pyrophosphokinase from Aquifex aeolicus (strain VF5).